The sequence spans 239 residues: 1-(5-phosphoribosyl)-5-[(5-phosphoribosylamino)methylideneamino] imidazole-4-carboxamide isomerase (239 aa).

Asp9 functions as the Proton acceptor in the catalytic mechanism. Residue Asp131 is the Proton donor of the active site.

Belongs to the HisA/HisF family.

It localises to the cytoplasm. It catalyses the reaction 1-(5-phospho-beta-D-ribosyl)-5-[(5-phospho-beta-D-ribosylamino)methylideneamino]imidazole-4-carboxamide = 5-[(5-phospho-1-deoxy-D-ribulos-1-ylimino)methylamino]-1-(5-phospho-beta-D-ribosyl)imidazole-4-carboxamide. It participates in amino-acid biosynthesis; L-histidine biosynthesis; L-histidine from 5-phospho-alpha-D-ribose 1-diphosphate: step 4/9. The sequence is that of 1-(5-phosphoribosyl)-5-[(5-phosphoribosylamino)methylideneamino] imidazole-4-carboxamide isomerase from Parabacteroides distasonis (strain ATCC 8503 / DSM 20701 / CIP 104284 / JCM 5825 / NCTC 11152).